We begin with the raw amino-acid sequence, 283 residues long: Acetylglutamate kinase (283 aa).

Residues 63–64, Arg-85, and Asn-179 each bind substrate; that span reads GG.

It belongs to the acetylglutamate kinase family. ArgB subfamily.

The protein localises to the cytoplasm. The enzyme catalyses N-acetyl-L-glutamate + ATP = N-acetyl-L-glutamyl 5-phosphate + ADP. Its pathway is amino-acid biosynthesis; L-arginine biosynthesis; N(2)-acetyl-L-ornithine from L-glutamate: step 2/4. Its function is as follows. Catalyzes the ATP-dependent phosphorylation of N-acetyl-L-glutamate. This Clostridium kluyveri (strain NBRC 12016) protein is Acetylglutamate kinase.